The primary structure comprises 362 residues: Porin Omp2b (362 aa).

Residues 1–22 (MNIKSLLLGSAAALVAASGAQA) form the signal peptide.

Belongs to the alphaproteobacteria porin family. As to quaternary structure, homotrimer.

Its subcellular location is the cell outer membrane. Forms passive diffusion pores that allow small molecular weight hydrophilic materials across the outer membrane. This chain is Porin Omp2b (omp2b), found in Brucella neotomae.